The primary structure comprises 184 residues: Dual-action ribosomal maturation protein DarP (184 aa).

The tract at residues 1–21 is disordered; the sequence is MYKHPDEEWLDEIPGQQENED.

It belongs to the DarP family.

Its subcellular location is the cytoplasm. Its function is as follows. Member of a network of 50S ribosomal subunit biogenesis factors which assembles along the 30S-50S interface, preventing incorrect 23S rRNA structures from forming. Promotes peptidyl transferase center (PTC) maturation. The protein is Dual-action ribosomal maturation protein DarP of Edwardsiella ictaluri (strain 93-146).